We begin with the raw amino-acid sequence, 226 residues long: NADH-ubiquinone oxidoreductase chain 6 (226 aa).

5 helical membrane-spanning segments follow: residues 2-22 (STLGLLLILLGIIITCTFVIL), 28-48 (IYSILNLIVIYGCYASILLTV), 56-76 (IYILVNVGAIAVLFLFIVMMI), 90-110 (YNIYMFVGFIGLIGIMGILIT), and 169-189 (IWFIMACIILLIGMVGVIYIT).

The protein belongs to the complex I subunit 6 family.

The protein resides in the mitochondrion membrane. The enzyme catalyses a ubiquinone + NADH + 5 H(+)(in) = a ubiquinol + NAD(+) + 4 H(+)(out). Core subunit of the mitochondrial membrane respiratory chain NADH dehydrogenase (Complex I) that is believed to belong to the minimal assembly required for catalysis. Complex I functions in the transfer of electrons from NADH to the respiratory chain. The immediate electron acceptor for the enzyme is believed to be ubiquinone. This Dictyostelium citrinum (Slime mold) protein is NADH-ubiquinone oxidoreductase chain 6 (nad6).